Reading from the N-terminus, the 259-residue chain is Tryptophan synthase alpha chain (259 aa).

Active-site proton acceptor residues include Glu-52 and Asp-63.

The protein belongs to the TrpA family. As to quaternary structure, tetramer of two alpha and two beta chains.

The catalysed reaction is (1S,2R)-1-C-(indol-3-yl)glycerol 3-phosphate + L-serine = D-glyceraldehyde 3-phosphate + L-tryptophan + H2O. Its pathway is amino-acid biosynthesis; L-tryptophan biosynthesis; L-tryptophan from chorismate: step 5/5. Its function is as follows. The alpha subunit is responsible for the aldol cleavage of indoleglycerol phosphate to indole and glyceraldehyde 3-phosphate. The chain is Tryptophan synthase alpha chain from Streptococcus sanguinis (strain SK36).